A 1742-amino-acid chain; its full sequence is NACHT and WD repeat domain-containing protein 2 (1742 aa).

5 LRR repeats span residues 386–410 (FYEYKCESLNIVHNYILPSKAGHIN), 677–698 (LEDVLALDNSVMSELKENTRPS), 724–747 (VKNVTLLVWANRHLQLIAQKLYLQ), 883–906 (YSQEKELKFLANTLRSIKNKVTAF), and 925–953 (LPKLRHLLLECDKDGPKYCSIVPLHSSMD). In terms of domain architecture, NACHT spans 410 to 737 (NPLIIYGGPC…TLLVWANRHL (328 aa)). 11 WD repeats span residues 963–1004 (LSSS…LLRQ), 1007–1046 (TAQSVILGMKLTSDEKYLVVATTNNTLLIYDNVNSCLLSE), 1140–1179 (FSGGFVKFLLILDTAQEMVMVDSEGSLSVWNTEDISSPQL), 1229–1271 (KHNE…ASLQ), 1272–1311 (EISGSIVKLVKSSHHNMLLSLSTSGVLSIWDIDIITAMSN), 1314–1353 (KTGKPIQSLLLPARGEIIYSLDGSDCVHKWNFSSGFIEAV), 1355–1394 (KHEGIVEHCVLTSTGDIMVTSDDKSSQYVWHTSSGENLFR), 1396–1434 (NGQRISQLLITHNDQFVVSLCEENASRVWRLATGHRVCN), 1476–1516 (EDGT…ICRR), 1522–1564 (NFLK…VHAS), and 1614–1653 (SLYKTPTFLALSQRHLNIIVGFDDGSIGIYTVVDRVDAAL).

This chain is NACHT and WD repeat domain-containing protein 2 (NWD2), found in Homo sapiens (Human).